A 273-amino-acid chain; its full sequence is Phosphate import ATP-binding protein PstB (273 aa).

The region spanning 17-259 (LSAENLSIFY…DKTNNIFQNP (243 aa)) is the ABC transporter domain. Position 49–56 (49–56 (GPSGCGKS)) interacts with ATP.

It belongs to the ABC transporter superfamily. Phosphate importer (TC 3.A.1.7) family. The complex is composed of two ATP-binding proteins (PstB), two transmembrane proteins (PstC and PstA) and a solute-binding protein (PstS).

The protein localises to the cell inner membrane. It catalyses the reaction phosphate(out) + ATP + H2O = ADP + 2 phosphate(in) + H(+). Its function is as follows. Part of the ABC transporter complex PstSACB involved in phosphate import. Responsible for energy coupling to the transport system. This Trichodesmium erythraeum (strain IMS101) protein is Phosphate import ATP-binding protein PstB.